A 1129-amino-acid chain; its full sequence is ISWI chromatin-remodeling complex ATPase ISW1 (1129 aa).

Residues 144–177 (KANGKGKGKHQDVRRRKTEHEEDAELLKEEDSDD) are disordered. The segment covering 147 to 160 (GKGKGKHQDVRRRK) has biased composition (basic residues). A compositionally biased stretch (acidic residues) spans 164-177 (EEDAELLKEEDSDD). A Helicase ATP-binding domain is found at 208-373 (VSLHKNKIAG…WALLNFLLPD (166 aa)). ATP is bound at residue 221–228 (DEMGLGKT). Positions 324–327 (DEAH) match the DEAH box motif. Residues 506–657 (VLDKLLKKLK…QLVIQQNRTS (152 aa)) enclose the Helicase C-terminal domain. The segment at 683–705 (FKSGTSTGSAGTPEPGSGEKGDD) is disordered. Phosphothreonine is present on Thr694. Residue Ser846 is modified to Phosphoserine. SANT domains are found at residues 882–935 (EGFT…SNIE) and 988–1052 (NKRT…LLQC). Over residues 1073-1108 (KEDENGKRIREEFADQTANEKENVDGVESKKAKIED) the composition is skewed to basic and acidic residues. The disordered stretch occupies residues 1073 to 1129 (KEDENGKRIREEFADQTANEKENVDGVESKKAKIEDTSNVGTEQLVAEKIPENETTH).

Belongs to the SNF2/RAD54 helicase family. ISWI subfamily. As to quaternary structure, component of the ISW1A complex, which at least consists of ISW1 and IOC3. Component of the ISW1B complex, which at least consists of ISW1, IOC2 and IOC4.

It is found in the nucleus. In terms of biological role, catalytic component of ISW1-type complexes, which act by remodeling the chromatin by catalyzing an ATP-dependent alteration in the structure of nucleosomal DNA. They are involved in coordinating transcriptional repression, activation and elongation phases. The ISW1A complex represses gene expression at initiation through specific positioning of a promoter proximal dinucleosome. The ISW1B complex acts within coding regions to control the amount of RNA polymerase II released into productive elongation and to coordinate elongation with termination and pre-mRNA processing. This Saccharomyces cerevisiae (strain ATCC 204508 / S288c) (Baker's yeast) protein is ISWI chromatin-remodeling complex ATPase ISW1 (ISW1).